Here is a 208-residue protein sequence, read N- to C-terminus: Glycerol-3-phosphate acyltransferase (208 aa).

Transmembrane regions (helical) follow at residues 3 to 23, 51 to 71, 78 to 98, 115 to 135, and 140 to 160; these read ILLA…VVVS, KAAI…VWLA, DVAI…PVFF, AVHP…AFFF, and LAAL…FGMP.

This sequence belongs to the PlsY family. Probably interacts with PlsX.

It localises to the cell inner membrane. The enzyme catalyses an acyl phosphate + sn-glycerol 3-phosphate = a 1-acyl-sn-glycero-3-phosphate + phosphate. Its pathway is lipid metabolism; phospholipid metabolism. Functionally, catalyzes the transfer of an acyl group from acyl-phosphate (acyl-PO(4)) to glycerol-3-phosphate (G3P) to form lysophosphatidic acid (LPA). This enzyme utilizes acyl-phosphate as fatty acyl donor, but not acyl-CoA or acyl-ACP. The chain is Glycerol-3-phosphate acyltransferase from Burkholderia orbicola (strain MC0-3).